The primary structure comprises 564 residues: Bifunctional protein CrtB/UppS (564 aa).

Asp329 is a catalytic residue. Asp329 contributes to the Mg(2+) binding site. Substrate is bound by residues 330-333 (GNRR), Trp334, His346, and 374-376 (STE). Residue Asn377 is the Proton acceptor of the active site. Substrate is bound by residues Trp378, Arg380, Arg497, and 502-504 (RIS). Glu515 is a binding site for Mg(2+).

In the N-terminal section; belongs to the phytoene/squalene synthase family. The protein in the C-terminal section; belongs to the UPP synthase family. As to quaternary structure, homodimer. Requires Mg(2+) as cofactor.

The enzyme catalyses 2 (2E,6E,10E)-geranylgeranyl diphosphate = 15-cis-phytoene + 2 diphosphate. It participates in carotenoid biosynthesis; phytoene biosynthesis; all-trans-phytoene from geranylgeranyl diphosphate: step 1/1. In terms of biological role, catalyzes the reaction from prephytoene diphosphate to phytoene. Functionally, catalyzes the condensation of isopentenyl diphosphate (IPP) with allylic pyrophosphates generating different type of terpenoids. In Streptomyces coelicolor (strain ATCC BAA-471 / A3(2) / M145), this protein is Bifunctional protein CrtB/UppS (crtB/uppS3).